A 529-amino-acid polypeptide reads, in one-letter code: Zinc finger protein 572 (529 aa).

A disordered region spans residues 1–62 (MEQEKKLLVS…EWSKRHRPQH (62 aa)). Glycyl lysine isopeptide (Lys-Gly) (interchain with G-Cter in SUMO2) cross-links involve residues lysine 5 and lysine 6. Polar residues predominate over residues 26–35 (TGDTSMNNLE). A compositionally biased stretch (basic and acidic residues) spans 36–55 (TVHHNNSKADKLKEKPSEWS). C2H2-type zinc fingers lie at residues 132–154 (YKCSECWKSFSNSSHLRTHQRTH), 160–182 (YKCSECAKCFCNSSHLIQHLRMH), 188–210 (YQCGECGKSFSNTSHLIIHERTH), 216–238 (YKCPECGKRFSSSSHLIQHHRSH), 244–266 (YECSVCGKGFSHSYVLIEHQRTH), 272–294 (YKCPDCGKSFSQSSSLIRHQRTH), 300–322 (YKCLECEKSFGCNSTLIKHQRIH), 328–350 (YQCPECGKNFSRSSNLITHQKMH), 384–406 (YRCCECGKSFGLSSHLIRHQRTH), 412–434 (YRCSECWKTFSQSSTLVIHQRTH), 440–462 (YKCPDCGESFSQSFNLIRHRRTH), and 468–490 (YKCTSCEKCFSRSAYLSQHRKIH).

It belongs to the krueppel C2H2-type zinc-finger protein family.

It is found in the nucleus. Functionally, may be involved in transcriptional regulation. This Homo sapiens (Human) protein is Zinc finger protein 572 (ZNF572).